We begin with the raw amino-acid sequence, 50 residues long: Thrombin-like enzyme BpirSP27 (50 aa).

A Peptidase S1 domain is found at 1-50 (VVGGDECNINEHRSLVAIFNSTGFFCSGILLNQEWVLTASHCDSTNFQMK). N-linked (GlcNAc...) asparagine glycosylation occurs at Asn20. A disulfide bridge links Cys26 with Cys42. The active-site Charge relay system is the His41.

The protein belongs to the peptidase S1 family. Snake venom subfamily. As to quaternary structure, monomer. In terms of processing, N-glycosylated. As to expression, expressed by the venom gland.

The protein localises to the secreted. Its activity is regulated as follows. Inhibited by serine protease inhibitors PMSF, benzamidine, leupeptin and aprotinin, as well as by copper (Cu2+) and manganese (Mn2+) ions. Not inhibited by metalloprotease inhibitors EDTA, EGTA and 1,10-phenanthroline, as well as by barium (Ba2+) and calcium ion (Ca2+). Functionally, snake venom serine protease that interferes with the hemostatic system of the prey. It preferentially degrades the Bbeta chain (FGB) of fibrinogen, with minor effects on the Aalpha chain (FGA). It presents a lower ability to degrade fibrin clots than BpirSP41. It hydrolyzes chromogenic substrates S-2238 (used for testing thrombin activity), S-2222 (factor Xa), S-2266 (glandular kallikrein and factor XIa), S-2302 (plasma kallikrein, factor XIa and XIIa), and S-2251 (plasmin). It shows a decrease in the clotting time of human plasma in the presence of increasing doses of the enzyme. Its minimum coagulant dose (MCD) is 3.5 ug. It also promotes platelet aggregation in a concentration-dependent manner in the presence or absence of calcium. It also shows 20% inhibition of the hemolytic activity promoted by the complement pathways and possess only a minor role in the induction of edema and pain in rat. This chain is Thrombin-like enzyme BpirSP27, found in Bothrops pirajai (Piraja's lancehead).